The following is a 900-amino-acid chain: UPF0182 protein Ppro_3567 (900 aa).

7 helical membrane-spanning segments follow: residues 15 to 35 (FFPL…LLNL), 60 to 80 (GAGL…LHVA), 112 to 132 (VSML…AMKW), 174 to 194 (FIIL…GGIL), 210 to 230 (LAVL…LDSF), 257 to 277 (VLTF…WKGV), and 282 to 302 (LLAP…YPGV).

The protein belongs to the UPF0182 family.

It localises to the cell membrane. The protein is UPF0182 protein Ppro_3567 of Pelobacter propionicus (strain DSM 2379 / NBRC 103807 / OttBd1).